Here is an 894-residue protein sequence, read N- to C-terminus: MTAIKHALQRDIFTPNDERLLSIVNVCKAGKKKKNCFLCATVTTERPVQVKVVKVKKSDKGDFYKRQIAWALRDLAVVDAKDAIKENPEFDLHFEKVYKWVASSTAEKNAFISCIWKLNQRYLRKKIDFVNVSSQLLEESVPSGENQSVAGGDEEAVDEYQELNAREEQDIEIMMEGCECAISNAEAFAEKLSRELQVLDGANIQSIMASEKQVNTLMQLLDEALTEVDQIELKLSSYEEMLQSVKEQMDQISESNHLIHLSNTNNVKLLSEIEFLVNHMDLAKGHIKALQEGDLVSSRGIEACTNAADALLQCMNVALRPGHDMLLAVKQQQQRFSDLREHFARRLASHLNNVFVQQGHDQSSTLAQHSVELTLPNHHPFHRDLLRYAKLMEWLKSTDYGKYEGLTKNYMDYLSRLYEREIKDFFEVAKMKMTGTSKESKKFATLPRKESAVKQETESLHGSSGKLTGSTSSLNKLSVQSSGSRRSQSSSLLDMGNMSASDLDVADRTKFDKIFEQVLSELEPLCLAEQDFISKFFKLQQHQNMSASMTEAEDLDGGSLLRQHSSGTLLPVSSEKDMIRQMMIKIFRCIEPELNNLIALGDKVDSFNSLYMLVKMSHHVWTAQNVDPASFLSTTLGNVLVTVKRNFDKCISNQIRQMEEVKISKKSKVGILPFVAEFEEFAGLAESIFKNAERRGDLDKAYTKLIRGVFINVEKVANESQKTPRDVVMMENFHHIFATLSRLKISCLEAEKKEAKQKYTDHLQSYVIYSLGQPLEKLNHFFEGVEARVAQGIREEEVSYQLAFNKQELRKVIKEYPGKEVKKGLDNLYKKVDKHLCEEENLLQVVWHSMQDEFIRQYKHFEGLIARCYPGSGVTMEFTIQDILDYCSSIAQSH.

Coiled coils occupy residues 152–199 (GDEE…LQVL) and 205–259 (QSIM…NHLI). The disordered stretch occupies residues 437–495 (SKESKKFATLPRKESAVKQETESLHGSSGKLTGSTSSLNKLSVQSSGSRRSQSSSLLDM). Over residues 438-459 (KESKKFATLPRKESAVKQETES) the composition is skewed to basic and acidic residues. The span at 460-491 (LHGSSGKLTGSTSSLNKLSVQSSGSRRSQSSS) shows a compositional bias: low complexity. The residue at position 470 (Ser-470) is a Phosphoserine. Residue Thr-471 is modified to Phosphothreonine. Phosphoserine occurs at positions 473, 487, and 501.

It belongs to the SEC3 family. The exocyst complex is composed of EXOC1, EXOC2, EXOC3, EXOC4, EXOC5, EXOC6, EXOC7 and EXOC8. Interacts with EEF1A1. Interacts with SLC6A9; interaction increases the transporter capacity of SLC6A9 probably by promoting its insertion into the cell membrane.

Its subcellular location is the midbody. It localises to the midbody ring. The protein localises to the cytoplasm. The protein resides in the perinuclear region. It is found in the cell membrane. Its function is as follows. Component of the exocyst complex involved in the docking of exocytic vesicles with fusion sites on the plasma membrane. The sequence is that of Exocyst complex component 1 (Exoc1) from Mus musculus (Mouse).